Consider the following 23-residue polypeptide: U22-ctenitoxin-Co1a (23 aa).

Expressed by the venom gland.

It is found in the secreted. In Ctenus ornatus (Brazilian spider), this protein is U22-ctenitoxin-Co1a.